Consider the following 110-residue polypeptide: MTYIVTDECVKCKYTDCVEVCPVDCFYEGEFMLVINPDECIDCGVCVPDCPIDAIKPESPELIEWVERAKDFIENQGWKNITKKKCALPDADKFKDEQDKFNKYIIKNMH.

4Fe-4S ferredoxin-type domains follow at residues 2–30 (TYIVTDECVKCKYTDCVEVCPVDCFYEGE) and 31–60 (FMLVINPDECIDCGVCVPDCPIDAIKPESP). Residues Cys9 and Cys17 each coordinate [3Fe-4S] cluster. [4Fe-4S] cluster-binding residues include Cys21, Cys40, Cys43, and Cys46. Position 50 (Cys50) interacts with [3Fe-4S] cluster.

[4Fe-4S] cluster is required as a cofactor. The cofactor is [3Fe-4S] cluster.

Functionally, ferredoxins are iron-sulfur proteins that transfer electrons in a wide variety of metabolic reactions. The sequence is that of Ferredoxin (fdxA) from Rickettsia typhi (strain ATCC VR-144 / Wilmington).